A 376-amino-acid polypeptide reads, in one-letter code: Putative F-box only protein 9 (376 aa).

Residues 1-44 (MSDLPPDLVEDILSRVPATSLKRLRFTCKQWNSLFKNRRFTEKH) form the F-box domain.

The polypeptide is Putative F-box only protein 9 (FBX9) (Arabidopsis thaliana (Mouse-ear cress)).